Here is a 76-residue protein sequence, read N- to C-terminus: Alpha/kappa-conotoxin-like fe14.2 (76 aa).

Residues 1-24 (MPSVRSVTCCCLLWMMLSVQLVTP) form the signal peptide. Positions 25–39 (GSPGTAQLSGQRTAR) are excised as a propeptide. 2 cysteine pairs are disulfide-bonded: Cys-46–Cys-61 and Cys-50–Cys-63. An Arginine amide modification is found at Arg-64. Residues 65-76 (GKRDVVSSSMAV) constitute a propeptide that is removed on maturation.

It belongs to the conotoxin J superfamily. Expressed by the venom duct.

It is found in the secreted. In terms of biological role, highly inhibits both nicotinic acetylcholine receptors (neuronal (alpha-3/beta-4) and muscular (alpha-1/beta-1/epsilon/delta) subtypes) and the voltage-gated potassium channel Kv1.6/KCNA6 subtype. This is Alpha/kappa-conotoxin-like fe14.2 from Conus ferrugineus (Cone snail).